The sequence spans 374 residues: o-succinylbenzoate synthase (374 aa).

K164 functions as the Proton donor in the catalytic mechanism. Positions 189, 214, and 239 each coordinate Mg(2+). K263 (proton acceptor) is an active-site residue.

Belongs to the mandelate racemase/muconate lactonizing enzyme family. MenC type 2 subfamily. As to quaternary structure, homodimer. The cofactor is a divalent metal cation.

It carries out the reaction (1R,6R)-6-hydroxy-2-succinyl-cyclohexa-2,4-diene-1-carboxylate = 2-succinylbenzoate + H2O. It functions in the pathway quinol/quinone metabolism; 1,4-dihydroxy-2-naphthoate biosynthesis; 1,4-dihydroxy-2-naphthoate from chorismate: step 4/7. Its pathway is quinol/quinone metabolism; menaquinone biosynthesis. Its function is as follows. Converts 2-succinyl-6-hydroxy-2,4-cyclohexadiene-1-carboxylate (SHCHC) to 2-succinylbenzoate (OSB). Also acts as a N-succinylamino acid racemase (NSAR) that catalyzes the racemization of N-succinyl-L-phenylglycine. L.innocua has the menaquinone synthesis pathway, indicating that the species requires OSBS activity. However, the NSAR/OSBS is not encoded in the menaquinone operon, raising the possibility that both NSAR and OSBS are biological functions. This Listeria innocua serovar 6a (strain ATCC BAA-680 / CLIP 11262) protein is o-succinylbenzoate synthase.